A 343-amino-acid polypeptide reads, in one-letter code: UDP-3-O-acylglucosamine N-acyltransferase (343 aa).

Catalysis depends on His-239, which acts as the Proton acceptor.

This sequence belongs to the transferase hexapeptide repeat family. LpxD subfamily. Homotrimer.

It catalyses the reaction a UDP-3-O-[(3R)-3-hydroxyacyl]-alpha-D-glucosamine + a (3R)-hydroxyacyl-[ACP] = a UDP-2-N,3-O-bis[(3R)-3-hydroxyacyl]-alpha-D-glucosamine + holo-[ACP] + H(+). It participates in bacterial outer membrane biogenesis; LPS lipid A biosynthesis. Functionally, catalyzes the N-acylation of UDP-3-O-acylglucosamine using 3-hydroxyacyl-ACP as the acyl donor. Is involved in the biosynthesis of lipid A, a phosphorylated glycolipid that anchors the lipopolysaccharide to the outer membrane of the cell. The polypeptide is UDP-3-O-acylglucosamine N-acyltransferase (Vibrio parahaemolyticus serotype O3:K6 (strain RIMD 2210633)).